The sequence spans 462 residues: Glycoprotein endo-alpha-1,2-mannosidase (462 aa).

Topologically, residues 1 to 8 are cytoplasmic; it reads MAKFRRRT. A helical; Signal-anchor for type II membrane protein transmembrane segment spans residues 9-29; the sequence is CIILALFILFIFSLMMGLKML. The Lumenal portion of the chain corresponds to 30–462; that stretch reads RPNTATFGAP…YALDRQLPVS (433 aa). Residues 60 to 462 are catalytic; the sequence is DFQKSDRINS…YALDRQLPVS (403 aa).

This sequence belongs to the glycosyl hydrolase 99 family. Post-translationally, undergoes proteolytic cleavage in the C-terminal region. As to expression, highly expressed in the liver and kidney. Expressed at lower levels in muscle, pancreas, heart, placenta, lung and brain.

Its subcellular location is the golgi apparatus membrane. It catalyses the reaction N-{alpha-Glc-(1-&gt;3)-alpha-Man-(1-&gt;2)-alpha-Man-(1-&gt;2)-alpha-Man-(1-&gt;3)-[alpha-Man-(1-&gt;2)-alpha-Man-(1-&gt;3)-[alpha-Man-(1-&gt;2)-alpha-Man-(1-&gt;6)]-alpha-Man-(1-&gt;6)]-beta-Man-(1-&gt;4)-beta-GlcNAc-(1-&gt;4)-beta-GlcNAc}-L-asparaginyl-[protein] + H2O = alpha-D-glucosyl-(1-&gt;3)-D-mannopyranose + N(4)-{alpha-D-Man-(1-&gt;2)-alpha-D-Man-(1-&gt;3)-[alpha-D-Man-(1-&gt;2)-alpha-D-Man-(1-&gt;3)-[alpha-D-Man-(1-&gt;2)-alpha-D-Man-(1-&gt;6)]-alpha-D-Man-(1-&gt;6)]-beta-D-Man-(1-&gt;4)-beta-D-GlaNAc-(1-&gt;4)-beta-D-GlcNAc}-L-asparaginyl-[protein] (N-glucan mannose isomer 8A1,2,3B1,2). This chain is Glycoprotein endo-alpha-1,2-mannosidase (MANEA), found in Homo sapiens (Human).